Here is a 101-residue protein sequence, read N- to C-terminus: A-type ATP synthase subunit F (101 aa).

The protein belongs to the V-ATPase F subunit family. As to quaternary structure, has multiple subunits with at least A(3), B(3), C, D, E, F, H, I and proteolipid K(x).

The protein localises to the cell membrane. Component of the A-type ATP synthase that produces ATP from ADP in the presence of a proton gradient across the membrane. The chain is A-type ATP synthase subunit F from Archaeoglobus fulgidus (strain ATCC 49558 / DSM 4304 / JCM 9628 / NBRC 100126 / VC-16).